A 1484-amino-acid chain; its full sequence is Cystic fibrosis transmembrane conductance regulator (1484 aa).

The Cytoplasmic portion of the chain corresponds to 1–77; sequence MQRSPLERAN…KLINALRRCF (77 aa). Residues 78 to 98 traverse the membrane as a helical segment; sequence FWRFMFYGLLLYLGEVTKAVQ. Residues 81–365 form the ABC transmembrane type-1 1 domain; the sequence is FMFYGLLLYL…WAVQMWYDSI (285 aa). At 99 to 122 the chain is on the extracellular side; the sequence is PLLLGRIIASYDPDNAHERSIAYY. Residues 123–146 traverse the membrane as a helical segment; the sequence is LGIGLCLLFIVRTLLLHPAVFGLH. Residues 147–195 are Cytoplasmic-facing; sequence HIGMQMRIALFSLIYKKTLKLSSRVLDKISTGQLVSLLSNNLNKFDEGL. Residues 196 to 216 form a helical membrane-spanning segment; the sequence is ALAHFVWIAPLQVMLLMGLLW. Residues 217-222 are Extracellular-facing; the sequence is DLLQAS. Residues 223–243 traverse the membrane as a helical segment; it reads AFCGLAVLVVLVLFQAWLGHR. Residues 244 to 298 are Cytoplasmic-facing; the sequence is MMKYRDRRAGKINERLVITAEIIENIQSVKAYCWEEAMENMIESLRETELKLTRK. A helical transmembrane segment spans residues 299–319; the sequence is AAYMRYFNSSAFFFSGFFVVF. The Extracellular segment spans residues 320 to 339; the sequence is LSVLPSMLTKGIVLRKIFTT. A helical membrane pass occupies residues 340 to 358; that stretch reads ISFCIVLRMAVTRQFPWAV. Residues 359–859 lie on the Cytoplasmic side of the membrane; it reads QMWYDSIGAI…YLRYMTIHKK (501 aa). ATP-binding positions include Trp-401, Ser-434, 458–465, and Gln-493; that span reads GSTGAGKT. Residues 423–646 enclose the ABC transporter 1 domain; sequence SDDKNLIFSN…RPDFSSKLMG (224 aa). A lipid anchor (S-palmitoyl cysteine) is attached at Cys-524. Ser-549 and Ser-660 each carry phosphoserine. The tract at residues 654–832 is disordered R region; that stretch reads SAERRNSILT…EEINEEDLKE (179 aa). Ser-670 is modified (phosphoserine; by PKA). Ser-686 is subject to Phosphoserine. Lys-688 is covalently cross-linked (Glycyl lysine isopeptide (Lys-Gly) (interchain with G-Cter in ubiquitin)). A phosphoserine mark is found at Ser-700, Ser-712, Ser-737, Ser-768, Ser-791, Ser-796, and Ser-814. Residues 860–880 form a helical membrane-spanning segment; sequence LIFVLMMCLVIFLIEVAASLV. Residues 860 to 1159 form the ABC transmembrane type-1 2 domain; sequence LIFVLMMCLV…AVNASIDVDS (300 aa). At 881-922 the chain is on the extracellular side; it reads GLCLFKDGASRMNSTSNLNHTSTLDWFAVIVTNTSTYYMFYI. Residues Asn-893, Asn-899, and Asn-913 are each glycosylated (N-linked (GlcNAc...) asparagine). Residues 923–943 form a discontinuously helical membrane-spanning segment; that stretch reads YVGVADTLLALGFLRGLPLVH. The Cytoplasmic segment spans residues 944–994; that stretch reads SLISVSKILHQKMLHSVLQAPMSTFNTLKTGSILNRFSKDMAILDDLLPLT. A helical transmembrane segment spans residues 995 to 1015; the sequence is IFDFIQLLLIVIGAVTVVSAL. Residues 1016–1017 are Extracellular-facing; the sequence is QP. Residues 1018 to 1038 traverse the membrane as a helical segment; the sequence is YIFLASVPVVIAFVLLRAYFL. The Cytoplasmic segment spans residues 1039-1099; it reads RTSQQLKQLE…TANWFLYLST (61 aa). The helical transmembrane segment at 1100–1120 threads the bilayer; the sequence is LRWFQMRIEMVFVIFFILVTF. Topologically, residues 1121–1134 are extracellular; sequence ISILTTGDGEGKVG. Residues 1135–1155 form a helical membrane-spanning segment; that stretch reads IVLTLAMNIMGTLQWAVNASI. The Cytoplasmic portion of the chain corresponds to 1156–1484; sequence DVDSLMRSVS…TEEEVQDTRL (329 aa). The ABC transporter 2 domain occupies 1212–1445; the sequence is MTVQDLTAKY…KSVFKQAISH (234 aa). Residues Tyr-1221 and 1246–1253 contribute to the ATP site; that span reads GRTGSGKS. Residues 1388-1484 are interaction with GORASP2; the sequence is KTLKQAFTNC…TEEEVQDTRL (97 aa). The S-palmitoyl cysteine moiety is linked to residue Cys-1397. 2 positions are modified to phosphoserine: Ser-1446 and Ser-1460. The tract at residues 1463–1484 is disordered; sequence LSRPKITALQEETEEEVQDTRL. Over residues 1473-1484 the composition is skewed to acidic residues; sequence EETEEEVQDTRL. The PDZ-binding motif lies at 1482–1484; the sequence is TRL.

The protein belongs to the ABC transporter superfamily. ABCC family. CFTR transporter (TC 3.A.1.202) subfamily. As to quaternary structure, monomer; does not require oligomerization for channel activity. May form oligomers in the membrane. Interacts with SLC26A3, SLC26A6 and NHERF1. Interacts with SHANK2. Interacts with MYO6. Interacts (via C-terminus) with GOPC (via PDZ domain); this promotes CFTR internalization and thereby decreases channel activity. Interacts with SLC4A7 through NHERF1. Found in a complex with MYO5B and RAB11A. Interacts with ANO1. Interacts with SLC26A8. Interacts with AHCYL1; the interaction increases CFTR activity. Interacts with CSE1L. The core-glycosylated form interacts with GORASP2 (via PDZ GRASP-type 1 domain) in respone to ER stress. Interacts with MARCHF2; the interaction leads to CFTR ubiqtuitination and degradation. Interacts with ADGRG2. In terms of processing, N-glycosylated. Phosphorylated; cAMP treatment promotes phosphorylation and activates the channel. Dephosphorylation decreases the ATPase activity (in vitro). Phosphorylation at PKA sites activates the channel. Phosphorylation at PKC sites enhances the response to phosphorylation by PKA. Phosphorylated by AMPK; this inhibits channel activity. Post-translationally, ubiquitinated, leading to its degradation in the lysosome. Deubiquitination by USP10 in early endosomes enhances its endocytic recycling to the cell membrane. Ubiquitinated by RNF185 during ER stress. Ubiquitinated by MARCHF2.

Its subcellular location is the apical cell membrane. The protein resides in the early endosome membrane. The protein localises to the cell membrane. It localises to the recycling endosome membrane. It is found in the endoplasmic reticulum membrane. Its subcellular location is the nucleus. It catalyses the reaction ATP + H2O + closed Cl(-) channel = ADP + phosphate + open Cl(-) channel.. It carries out the reaction chloride(in) = chloride(out). The enzyme catalyses hydrogencarbonate(in) = hydrogencarbonate(out). The catalysed reaction is ATP + H2O = ADP + phosphate + H(+). Functionally, epithelial ion channel that plays an important role in the regulation of epithelial ion and water transport and fluid homeostasis. Mediates the transport of chloride ions across the cell membrane. Possesses an intrinsic ATPase activity and utilizes ATP to gate its channel; the passive flow of anions through the channel is gated by cycles of ATP binding and hydrolysis by the ATP-binding domains. The ion channel is also permeable to HCO(3)(-); selectivity depends on the extracellular chloride concentration. Exerts its function also by modulating the activity of other ion channels and transporters. Contributes to the regulation of the pH and the ion content of the epithelial fluid layer. Modulates the activity of the epithelial sodium channel (ENaC) complex, in part by regulating the cell surface expression of the ENaC complex. May regulate bicarbonate secretion and salvage in epithelial cells by regulating the transporter SLC4A7. Can inhibit the chloride channel activity of ANO1. Plays a role in the chloride and bicarbonate homeostasis during sperm epididymal maturation and capacitation. In Ornithorhynchus anatinus (Duckbill platypus), this protein is Cystic fibrosis transmembrane conductance regulator.